Consider the following 314-residue polypeptide: Methionyl-tRNA formyltransferase (314 aa).

111–114 is a (6S)-5,6,7,8-tetrahydrofolate binding site; it reads SLLP.

The protein belongs to the Fmt family.

It catalyses the reaction L-methionyl-tRNA(fMet) + (6R)-10-formyltetrahydrofolate = N-formyl-L-methionyl-tRNA(fMet) + (6S)-5,6,7,8-tetrahydrofolate + H(+). Attaches a formyl group to the free amino group of methionyl-tRNA(fMet). The formyl group appears to play a dual role in the initiator identity of N-formylmethionyl-tRNA by promoting its recognition by IF2 and preventing the misappropriation of this tRNA by the elongation apparatus. The polypeptide is Methionyl-tRNA formyltransferase (Coxiella burnetii (strain CbuG_Q212) (Coxiella burnetii (strain Q212))).